We begin with the raw amino-acid sequence, 217 residues long: Large ribosomal subunit protein uL1 (217 aa).

Belongs to the universal ribosomal protein uL1 family.

In Drosophila melanogaster (Fruit fly), this protein is Large ribosomal subunit protein uL1 (RpL10Ab).